Reading from the N-terminus, the 122-residue chain is Large ribosomal subunit protein uL14 (122 aa).

This sequence belongs to the universal ribosomal protein uL14 family. Part of the 50S ribosomal subunit. Forms a cluster with proteins L3 and L19. In the 70S ribosome, L14 and L19 interact and together make contacts with the 16S rRNA in bridges B5 and B8.

In terms of biological role, binds to 23S rRNA. Forms part of two intersubunit bridges in the 70S ribosome. This Acinetobacter baylyi (strain ATCC 33305 / BD413 / ADP1) protein is Large ribosomal subunit protein uL14.